Here is a 376-residue protein sequence, read N- to C-terminus: Non-structural protein NS2 (376 aa).

The segment covering 163–188 has biased composition (basic and acidic residues); it reads EEREKGAVEQPHKPAFKTERGMNRPD. The segment at 163-201 is disordered; that stretch reads EEREKGAVEQPHKPAFKTERGMNRPDSDEDQNPAGGVVN.

This sequence belongs to the orbivirus non-structural protein NS2 family.

Its function is as follows. Single-stranded RNA-binding protein. The sequence is that of Non-structural protein NS2 (Segment-8) from Antilocapra americana (Pronghorn).